A 209-amino-acid chain; its full sequence is Kynurenine formamidase (209 aa).

Substrate is bound at residue Trp19. Residues His49, His53, and Asp55 each coordinate Zn(2+). His59 serves as the catalytic Proton donor/acceptor. Residues His160 and Glu172 each coordinate Zn(2+).

This sequence belongs to the Cyclase 1 superfamily. KynB family. As to quaternary structure, homodimer. Zn(2+) serves as cofactor.

The catalysed reaction is N-formyl-L-kynurenine + H2O = L-kynurenine + formate + H(+). It participates in amino-acid degradation; L-tryptophan degradation via kynurenine pathway; L-kynurenine from L-tryptophan: step 2/2. Its function is as follows. Catalyzes the hydrolysis of N-formyl-L-kynurenine to L-kynurenine, the second step in the kynurenine pathway of tryptophan degradation. In Ralstonia pickettii (strain 12J), this protein is Kynurenine formamidase.